We begin with the raw amino-acid sequence, 682 residues long: MASPDRSKRKILKAKKTMPLSCRKQVEMLNKSRNVEALKTAIGSNVPSGNQSFSPSVITRTTEITKCSPSENGASSLDSNKNSISEKSKVFSQNCIKPVEEIVHSETKLEQVVCSYQKPSRTTESPSRVFTEEAKDSLNTSENDSEHQTNVTRSLFEHEGACSLKSSCCPPSVLSGVVQMPESTVTSTVGDKKTDQMVFHLETNSNSESHDKRQSDNILCSEDSGFVPVEKTPNLVNSVTSNNCADDILKTDECSRTSISNCESADSTWQSSLDTNNNSHYQKKRMFSENEENVKRMKTSEQINENICVSLERQTAFLEQVRHLIQQEIYSINYELFDKKLKELNQRIGKTECRNKHEGIADKLLAKIAKLQRRIKTVLLFQRNCLKPNMLSSNGASKVANSEAMILDKNLESVNSPIEKSSVNYEPSNPSEKGSKKINLSSDQNKSVSESNNDDVMLISVESPNLTTPITSNPTDTRKITSGNSSNSPNAEVMAVQKKLDSIIDLTKEGLSNCNTESPVSPLESHSKAASNSKETTPLAQNAVQVPESFEHLPPLPEPPAPLPELVDKTRDTLPPQKPELKVKRVFRPNGIALTWNITKINPKCAPVESYHLFLCHENSNNKLIWKKIGEIKALPLPMACTLSQFLASNRYYFTVQSKDIFGRYGPFCDIKSIPGFSENLT.

Residues 120–148 (SRTTESPSRVFTEEAKDSLNTSENDSEHQ) are disordered. Residues 137–148 (SLNTSENDSEHQ) show a composition bias toward polar residues. A coiled-coil region spans residues 328–378 (EIYSINYELFDKKLKELNQRIGKTECRNKHEGIADKLLAKIAKLQRRIKTV). Residue serine 416 is modified to Phosphoserine. Composition is skewed to polar residues over residues 418–451 (IEKSSVNYEPSNPSEKGSKKINLSSDQNKSVSES) and 462–490 (ESPNLTTPITSNPTDTRKITSGNSSNSPN). Disordered regions lie at residues 418–491 (IEKS…SPNA) and 513–538 (NCNTESPVSPLESHSKAASNSKETTP). 2 positions are modified to phosphoserine: serine 488 and serine 521. Residues 528 to 538 (KAASNSKETTP) show a composition bias toward polar residues. The 106-residue stretch at 575 to 680 (PPQKPELKVK…IKSIPGFSEN (106 aa)) folds into the Fibronectin type-III domain.

This sequence belongs to the MCAF family. Interacts with MBD1, SETDB1 and SP1. Probably forms a complex with SETDB1 and MBD1.

It is found in the nucleus. In terms of biological role, recruiter that couples transcriptional factors to general transcription apparatus and thereby modulates transcription regulation and chromatin formation. Can both act as an activator or a repressor depending on the context. Mediates MBD1-dependent transcriptional repression, probably by recruiting complexes containing SETDB1. The complex formed with MBD1 and SETDB1 represses transcription and probably couples DNA methylation and histone H3 'Lys-9' trimethylation (H3K9me3) activity. The polypeptide is Activating transcription factor 7-interacting protein 2 (ATF7IP2) (Homo sapiens (Human)).